The chain runs to 88 residues: Small ribosomal subunit protein eS25B (88 aa).

The protein belongs to the eukaryotic ribosomal protein eS25 family. As to quaternary structure, component of the small ribosomal subunit (SSU). Mature yeast ribosomes consist of a small (40S) and a large (60S) subunit. The 40S small subunit contains 1 molecule of ribosomal RNA (18S rRNA) and at least 33 different proteins. The large 60S subunit contains 3 rRNA molecules (25S, 5.8S and 5S rRNA) and at least 46 different proteins.

It localises to the cytoplasm. In terms of biological role, component of the ribosome, a large ribonucleoprotein complex responsible for the synthesis of proteins in the cell. The small ribosomal subunit (SSU) binds messenger RNAs (mRNAs) and translates the encoded message by selecting cognate aminoacyl-transfer RNA (tRNA) molecules. The large subunit (LSU) contains the ribosomal catalytic site termed the peptidyl transferase center (PTC), which catalyzes the formation of peptide bonds, thereby polymerizing the amino acids delivered by tRNAs into a polypeptide chain. The nascent polypeptides leave the ribosome through a tunnel in the LSU and interact with protein factors that function in enzymatic processing, targeting, and the membrane insertion of nascent chains at the exit of the ribosomal tunnel. The polypeptide is Small ribosomal subunit protein eS25B (rps2501) (Schizosaccharomyces pombe (strain 972 / ATCC 24843) (Fission yeast)).